Here is a 321-residue protein sequence, read N- to C-terminus: 2,3,4,5-tetrahydropyridine-2,6-dicarboxylate N-succinyltransferase (321 aa).

2 residues coordinate Mg(2+): Asp166 and Glu183. The active-site Acyl-anhydride intermediate is the Glu199. Residues Arg201, Gly216, Ser219, Ala242, 257 to 258 (EA), Gly265, Lys281, and 294 to 297 (RRNS) each bind succinyl-CoA.

It belongs to the type 2 tetrahydrodipicolinate N-succinyltransferase family. As to quaternary structure, homotrimer.

The protein localises to the cytoplasm. The catalysed reaction is (S)-2,3,4,5-tetrahydrodipicolinate + succinyl-CoA + H2O = (S)-2-succinylamino-6-oxoheptanedioate + CoA. The protein operates within amino-acid biosynthesis; L-lysine biosynthesis via DAP pathway; LL-2,6-diaminopimelate from (S)-tetrahydrodipicolinate (succinylase route): step 1/3. In terms of biological role, catalyzes the conversion of the cyclic tetrahydrodipicolinate (THDP) into the acyclic N-succinyl-L-2-amino-6-oxopimelate using succinyl-CoA. The chain is 2,3,4,5-tetrahydropyridine-2,6-dicarboxylate N-succinyltransferase from Micrococcus luteus (strain ATCC 4698 / DSM 20030 / JCM 1464 / CCM 169 / CCUG 5858 / IAM 1056 / NBRC 3333 / NCIMB 9278 / NCTC 2665 / VKM Ac-2230) (Micrococcus lysodeikticus).